We begin with the raw amino-acid sequence, 155 residues long: Ribonuclease 8 (155 aa).

The N-terminal stretch at 1–28 (MAPARAGCCPLLLLLLLGLWVAEIPVSA) is a signal peptide. Intrachain disulfides connect Cys65–Cys119, Cys83–Cys134, and Cys90–Cys97. Substrate contacts are provided by residues 66–70 (KDLNT) and Lys91. The active-site Proton donor is His150.

It belongs to the pancreatic ribonuclease family.

The protein resides in the secreted. Functionally, has a low ribonuclease activity. The protein is Ribonuclease 8 (RNASE8) of Saguinus oedipus (Cotton-top tamarin).